The primary structure comprises 499 residues: Glycerol kinase (499 aa).

Thr-12 serves as a coordination point for ADP. Thr-12, Thr-13, and Ser-14 together coordinate ATP. A sn-glycerol 3-phosphate-binding site is contributed by Thr-12. Arg-16 is a binding site for ADP. Positions 82, 83, and 134 each coordinate sn-glycerol 3-phosphate. 3 residues coordinate glycerol: Arg-82, Glu-83, and Tyr-134. His-230 bears the Phosphohistidine; by HPr mark. Asp-244 is a sn-glycerol 3-phosphate binding site. The glycerol site is built by Asp-244 and Gln-245. ADP is bound by residues Thr-266 and Gly-309. Positions 266, 309, 313, and 410 each coordinate ATP. Gly-410 and Asn-414 together coordinate ADP.

This sequence belongs to the FGGY kinase family. As to quaternary structure, homotetramer and homodimer (in equilibrium). Post-translationally, the phosphoenolpyruvate-dependent sugar phosphotransferase system (PTS), including enzyme I, and histidine-containing protein (HPr) are required for the phosphorylation, which leads to the activation of the enzyme.

It carries out the reaction glycerol + ATP = sn-glycerol 3-phosphate + ADP + H(+). It functions in the pathway polyol metabolism; glycerol degradation via glycerol kinase pathway; sn-glycerol 3-phosphate from glycerol: step 1/1. Activated by phosphorylation and inhibited by fructose 1,6-bisphosphate (FBP). Key enzyme in the regulation of glycerol uptake and metabolism. Catalyzes the phosphorylation of glycerol to yield sn-glycerol 3-phosphate. This Staphylococcus haemolyticus (strain JCSC1435) protein is Glycerol kinase.